The primary structure comprises 107 residues: Flagellar hook-basal body complex protein FliE (107 aa).

It belongs to the FliE family.

Its subcellular location is the bacterial flagellum basal body. This chain is Flagellar hook-basal body complex protein FliE, found in Cupriavidus pinatubonensis (strain JMP 134 / LMG 1197) (Cupriavidus necator (strain JMP 134)).